We begin with the raw amino-acid sequence, 290 residues long: Protease HtpX (290 aa).

Helical transmembrane passes span 6 to 26 and 36 to 56; these read LFLV…NILF and ISGL…ISLL. H143 lines the Zn(2+) pocket. The active site involves E144. H147 lines the Zn(2+) pocket. 2 consecutive transmembrane segments (helical) span residues 158–178 and 200–220; these read LIQG…AGVI and ITVF…VMWF. Residue E225 participates in Zn(2+) binding.

This sequence belongs to the peptidase M48B family. Zn(2+) is required as a cofactor.

It is found in the cell inner membrane. The chain is Protease HtpX from Aeromonas salmonicida (strain A449).